Here is a 66-residue protein sequence, read N- to C-terminus: Large ribosomal subunit protein eL24 (66 aa).

Zn(2+) is bound by residues cysteine 6, cysteine 9, cysteine 32, and cysteine 36. Residues 6–36 (CSFCGKSIEPASGFLYVRKDGSVLNFCSRKC) form a C4-type zinc finger.

Belongs to the eukaryotic ribosomal protein eL24 family. As to quaternary structure, part of the 50S ribosomal subunit. Forms a cluster with proteins L3 and L14. Zn(2+) is required as a cofactor.

Its function is as follows. Binds to the 23S rRNA. The chain is Large ribosomal subunit protein eL24 from Picrophilus torridus (strain ATCC 700027 / DSM 9790 / JCM 10055 / NBRC 100828 / KAW 2/3).